We begin with the raw amino-acid sequence, 112 residues long: ATP synthase subunit c (112 aa).

A run of 2 helical transmembrane segments spans residues 36-56 (FSVLAAGLGLGVAALGGAIGM) and 81-101 (MFIALAMIEAQVIYALVIALI).

Belongs to the ATPase C chain family. As to quaternary structure, F-type ATPases have 2 components, F(1) - the catalytic core - and F(0) - the membrane proton channel. F(1) has five subunits: alpha(3), beta(3), gamma(1), delta(1), epsilon(1). F(0) has three main subunits: a(1), b(2) and c(10-14). The alpha and beta chains form an alternating ring which encloses part of the gamma chain. F(1) is attached to F(0) by a central stalk formed by the gamma and epsilon chains, while a peripheral stalk is formed by the delta and b chains.

Its subcellular location is the cell inner membrane. Functionally, f(1)F(0) ATP synthase produces ATP from ADP in the presence of a proton or sodium gradient. F-type ATPases consist of two structural domains, F(1) containing the extramembraneous catalytic core and F(0) containing the membrane proton channel, linked together by a central stalk and a peripheral stalk. During catalysis, ATP synthesis in the catalytic domain of F(1) is coupled via a rotary mechanism of the central stalk subunits to proton translocation. The protein is ATP synthase subunit c of Campylobacter jejuni subsp. jejuni serotype O:2 (strain ATCC 700819 / NCTC 11168).